The chain runs to 389 residues: Tyrosinase-like protein phomQ1 (389 aa).

A helical membrane pass occupies residues 53–73 (TIIVVSVITFAAIIGCWVFLS). His141 and His150 together coordinate Cu cation. Residue Asn220 is glycosylated (N-linked (GlcNAc...) asparagine). Cu cation contacts are provided by His290 and His316.

It belongs to the tyrosinase family. Cu(2+) is required as a cofactor.

It is found in the membrane. Its pathway is mycotoxin biosynthesis. Its function is as follows. Tyrosinase-like protein; part of the gene cluster that mediates the biosynthesis of the phomopsins, a group of hexapeptide mycotoxins which infects lupins and causes lupinosis disease in livestock. Within the pathway, phomQ1 functions as a halogenase, converting. The pathway starts with the processing of the precursor phomA by several endopeptidases including kexin proteases as well as the cluster-specific S41 family peptidase phomP1 and the oligopeptidase phomG to produce 10 identical copies of the hexapeptide Tyr-Val-Ile-Pro-Ile-Asp. After being excised from the precursor peptide, the core peptides are cyclized and modified post-translationally by enzymes encoded within the gene cluster. The timing and order of proteolysis of the phomA precursor and PTMs are still unknown. Two tyrosinase-like enzymes, phomQ1 and phomQ2, catalyze the chlorination and hydroxylation of Tyr, respectively. PhomYb, is proposed to be involved in the construction of the macrocyclic structure. The other 4 ustYa family proteins may be involved in PTMs that generate the unique structure of phomopsin A. PhomYa is required for the hydroxylation of C-beta of Tyr. PhomYc, phomYd, and phomYe are responsible for the biosynthesis of 2,3-dehydroisoleucine (dIle), 2,3-dehydroaspartic acid (dAsp), and 3,4-dehydroproline (dPro), respectively. While dIle formation by phomYc is indispensable for the installation of dAsp by phomYd, the order of the other PTMs have not been elucidated yet. Most of the biosynthetic enzymes likely have broad substrate specificity, and thus, there might be a metabolic grid from a precursor to phomopsin A. The enzyme(s) responsible for the biosynthesis of 3,4-dehydrovaline (dVal) have also not been identified yet. Finally, phomM acts as an S-adenosylmethionine-dependent alpha-N-methyltransferase that catalyzes two successive N-methylation reactions, converting N-desmethyl-phomopsin A to phomopsin A and phomopsin A further to an N,N-dimethylated congener called phomopsin E. In Diaporthe leptostromiformis (Lupinosis disease fungus), this protein is Tyrosinase-like protein phomQ1.